Consider the following 148-residue polypeptide: CDC25-like phosphatase YCH1 (148 aa).

Met1 is modified (N-acetylmethionine). The region spanning 29-137 (LREPFQVVDV…WQSVYGDDES (109 aa)) is the Rhodanese domain.

The protein belongs to the MPI phosphatase family.

Its subcellular location is the cytoplasm. The protein localises to the nucleus. Functionally, protein phosphatase. This Saccharomyces cerevisiae (strain ATCC 204508 / S288c) (Baker's yeast) protein is CDC25-like phosphatase YCH1 (YCH1).